The chain runs to 137 residues: MLMPKRVKYRKMHRGRMKGKAKGGVSLAFGKYGLQALEPVWINSNQIEAARIALARSIKKGGKVWIRIFPDKPVTKKPAETRMGKGKGDPQFWVAVVKPGRVMFEMEGIPETEAKKALRLASNKLPIHTKILVRADI.

The protein belongs to the universal ribosomal protein uL16 family. Part of the 50S ribosomal subunit.

Functionally, binds 23S rRNA and is also seen to make contacts with the A and possibly P site tRNAs. In Endomicrobium trichonymphae, this protein is Large ribosomal subunit protein uL16.